The sequence spans 548 residues: uncharacterized protein (548 aa).

The DhaL domain maps to 8–200 (KLFADMIIQG…LLCVYEGFLK (193 aa)).

This is an uncharacterized protein from Staphylococcus aureus (strain bovine RF122 / ET3-1).